The following is a 290-amino-acid chain: UPF0761 membrane protein YihY (290 aa).

6 helical membrane-spanning segments follow: residues 44 to 64 (LLSL…FPMF), 104 to 124 (VGAC…DSAL), 140 to 160 (FAVY…SLAI), 183 to 203 (ILPL…VPTT), 210 to 230 (ALVG…GFAL), and 244 to 264 (VLAV…IVLL).

Belongs to the UPF0761 family.

It is found in the cell inner membrane. The chain is UPF0761 membrane protein YihY from Salmonella agona (strain SL483).